The following is a 207-amino-acid chain: Superoxide dismutase [Mn] (207 aa).

Mn(2+)-binding residues include His28, His76, Asp160, and His164.

This sequence belongs to the iron/manganese superoxide dismutase family. The cofactor is Mn(2+).

The enzyme catalyses 2 superoxide + 2 H(+) = H2O2 + O2. Functionally, destroys superoxide anion radicals which are normally produced within the cells and which are toxic to biological systems. The chain is Superoxide dismutase [Mn] (sodA) from Mycobacterium avium.